Here is a 218-residue protein sequence, read N- to C-terminus: Thiopurine S-methyltransferase (218 aa).

S-adenosyl-L-methionine is bound by residues tryptophan 10, leucine 45, glutamate 66, and arginine 123.

The protein belongs to the class I-like SAM-binding methyltransferase superfamily. TPMT family.

The protein localises to the cytoplasm. The enzyme catalyses S-adenosyl-L-methionine + a thiopurine = S-adenosyl-L-homocysteine + a thiopurine S-methylether.. This chain is Thiopurine S-methyltransferase, found in Shewanella baltica (strain OS223).